We begin with the raw amino-acid sequence, 446 residues long: Exodeoxyribonuclease 7 large subunit (446 aa).

Belongs to the XseA family. Heterooligomer composed of large and small subunits.

The protein localises to the cytoplasm. It catalyses the reaction Exonucleolytic cleavage in either 5'- to 3'- or 3'- to 5'-direction to yield nucleoside 5'-phosphates.. Bidirectionally degrades single-stranded DNA into large acid-insoluble oligonucleotides, which are then degraded further into small acid-soluble oligonucleotides. The protein is Exodeoxyribonuclease 7 large subunit of Streptococcus pneumoniae (strain ATCC BAA-255 / R6).